We begin with the raw amino-acid sequence, 343 residues long: Uroporphyrinogen decarboxylase (343 aa).

Substrate contacts are provided by residues 21 to 25, aspartate 71, tyrosine 148, serine 203, and histidine 316; that span reads RQAGR.

This sequence belongs to the uroporphyrinogen decarboxylase family. As to quaternary structure, homodimer.

Its subcellular location is the cytoplasm. The enzyme catalyses uroporphyrinogen III + 4 H(+) = coproporphyrinogen III + 4 CO2. Its pathway is porphyrin-containing compound metabolism; protoporphyrin-IX biosynthesis; coproporphyrinogen-III from 5-aminolevulinate: step 4/4. Its function is as follows. Catalyzes the decarboxylation of four acetate groups of uroporphyrinogen-III to yield coproporphyrinogen-III. The protein is Uroporphyrinogen decarboxylase of Campylobacter fetus subsp. fetus (strain 82-40).